The sequence spans 504 residues: Glucose-6-phosphate isomerase (504 aa).

The Proton donor role is filled by Glu333. Catalysis depends on residues His364 and Lys473.

The protein belongs to the GPI family.

Its subcellular location is the cytoplasm. It carries out the reaction alpha-D-glucose 6-phosphate = beta-D-fructose 6-phosphate. It functions in the pathway carbohydrate biosynthesis; gluconeogenesis. It participates in carbohydrate degradation; glycolysis; D-glyceraldehyde 3-phosphate and glycerone phosphate from D-glucose: step 2/4. Catalyzes the reversible isomerization of glucose-6-phosphate to fructose-6-phosphate. In Xanthomonas campestris pv. campestris (strain B100), this protein is Glucose-6-phosphate isomerase.